A 398-amino-acid polypeptide reads, in one-letter code: Phosphomevalonate dehydratase large subunit (398 aa).

(R)-5-phosphomevalonate is bound by residues glycine 48, valine 49, serine 50, asparagine 76, and proline 77. Cysteine 116 is a binding site for [4Fe-4S] cluster. 2 residues coordinate (R)-5-phosphomevalonate: glutamate 136 and serine 137. [4Fe-4S] cluster contacts are provided by cysteine 287 and cysteine 342. Lysine 361 contributes to the (R)-5-phosphomevalonate binding site.

It belongs to the AcnX type II large subunit family. In terms of assembly, heterodimer composed of a large subunit (PMDh-L) and a small subunit (PMDh-S). It depends on [4Fe-4S] cluster as a cofactor.

It catalyses the reaction (R)-5-phosphomevalonate = (2E)-3-methyl-5-phosphooxypent-2-enoate + H2O. Its pathway is isoprenoid biosynthesis; isopentenyl diphosphate biosynthesis via mevalonate pathway. Component of a hydro-lyase that catalyzes the dehydration of mevalonate 5-phosphate (MVA5P) to form trans-anhydromevalonate 5-phosphate (tAHMP). Involved in the archaeal mevalonate (MVA) pathway, which provides fundamental precursors for isoprenoid biosynthesis, such as isopentenyl diphosphate (IPP) and dimethylallyl diphosphate (DMAPP). This chain is Phosphomevalonate dehydratase large subunit, found in Methanosarcina mazei (strain ATCC BAA-159 / DSM 3647 / Goe1 / Go1 / JCM 11833 / OCM 88) (Methanosarcina frisia).